Reading from the N-terminus, the 226-residue chain is Phosphoribosylformylglycinamidine synthase subunit PurQ (226 aa).

One can recognise a Glutamine amidotransferase type-1 domain in the interval 2–226 (KIAVIVFPGS…LENGTVIAEG (225 aa)). The Nucleophile role is filled by Cys86. Catalysis depends on residues His195 and Glu197.

As to quaternary structure, part of the FGAM synthase complex composed of 1 PurL, 1 PurQ and 2 PurS subunits.

It is found in the cytoplasm. The enzyme catalyses N(2)-formyl-N(1)-(5-phospho-beta-D-ribosyl)glycinamide + L-glutamine + ATP + H2O = 2-formamido-N(1)-(5-O-phospho-beta-D-ribosyl)acetamidine + L-glutamate + ADP + phosphate + H(+). It catalyses the reaction L-glutamine + H2O = L-glutamate + NH4(+). It participates in purine metabolism; IMP biosynthesis via de novo pathway; 5-amino-1-(5-phospho-D-ribosyl)imidazole from N(2)-formyl-N(1)-(5-phospho-D-ribosyl)glycinamide: step 1/2. In terms of biological role, part of the phosphoribosylformylglycinamidine synthase complex involved in the purines biosynthetic pathway. Catalyzes the ATP-dependent conversion of formylglycinamide ribonucleotide (FGAR) and glutamine to yield formylglycinamidine ribonucleotide (FGAM) and glutamate. The FGAM synthase complex is composed of three subunits. PurQ produces an ammonia molecule by converting glutamine to glutamate. PurL transfers the ammonia molecule to FGAR to form FGAM in an ATP-dependent manner. PurS interacts with PurQ and PurL and is thought to assist in the transfer of the ammonia molecule from PurQ to PurL. The polypeptide is Phosphoribosylformylglycinamidine synthase subunit PurQ (Limosilactobacillus fermentum (strain NBRC 3956 / LMG 18251) (Lactobacillus fermentum)).